The primary structure comprises 642 residues: 1-deoxy-D-xylulose-5-phosphate synthase (642 aa).

Residues His-79 and 120–122 (AHS) each bind thiamine diphosphate. Asp-155 is a binding site for Mg(2+). Thiamine diphosphate is bound by residues 156-157 (GS), Asn-184, Tyr-293, and Glu-375. Position 184 (Asn-184) interacts with Mg(2+).

This sequence belongs to the transketolase family. DXPS subfamily. In terms of assembly, homodimer. Requires Mg(2+) as cofactor. Thiamine diphosphate serves as cofactor.

It catalyses the reaction D-glyceraldehyde 3-phosphate + pyruvate + H(+) = 1-deoxy-D-xylulose 5-phosphate + CO2. It participates in metabolic intermediate biosynthesis; 1-deoxy-D-xylulose 5-phosphate biosynthesis; 1-deoxy-D-xylulose 5-phosphate from D-glyceraldehyde 3-phosphate and pyruvate: step 1/1. Catalyzes the acyloin condensation reaction between C atoms 2 and 3 of pyruvate and glyceraldehyde 3-phosphate to yield 1-deoxy-D-xylulose-5-phosphate (DXP). In Ruegeria pomeroyi (strain ATCC 700808 / DSM 15171 / DSS-3) (Silicibacter pomeroyi), this protein is 1-deoxy-D-xylulose-5-phosphate synthase.